Consider the following 462-residue polypeptide: MYKEYSDLKDKRILVVGLGKTGVSLAHFLTKHGAQVTVTDHKSKPELSVQLEQLGELPIKFELGGHSPKTFIAQDLVILSPGVPSNLKIFDYARSQGIKITGEFEFSAGFIKEPIIGLTGTNGKTTVAKITEAILTESGVKTWVGGANEKPLVDYLRLDDKAQVVIAEVSSFMLEHCDTFNPGNIVFTNLAENHLDRYRSMEEYVNAKRRIFKNTNQATTSILNADDNAVVELARDPAVQRGRIFYFSRKPALEPQIMNIGGAVNIGDEIRVRTGPEIESFNIKGMKMRGKHSVENIMAAILASREHGATREAVQKVINTFTGLPHRIEYVRKVGGVMFYNDSKATNVHAVLRALDTFDENVILIAGGKDTNLNYEPLRTSVKRKVKTLILVGEAKERINRDLGDFSETFLIGTFEEAVLIAYQKSRIGDVVLLSPGCSSFDMFDSFEERGDYFKEIVRKFH.

120–126 is a binding site for ATP; it reads GTNGKTT.

It belongs to the MurCDEF family.

The protein localises to the cytoplasm. It catalyses the reaction UDP-N-acetyl-alpha-D-muramoyl-L-alanine + D-glutamate + ATP = UDP-N-acetyl-alpha-D-muramoyl-L-alanyl-D-glutamate + ADP + phosphate + H(+). Its pathway is cell wall biogenesis; peptidoglycan biosynthesis. Cell wall formation. Catalyzes the addition of glutamate to the nucleotide precursor UDP-N-acetylmuramoyl-L-alanine (UMA). This Bdellovibrio bacteriovorus (strain ATCC 15356 / DSM 50701 / NCIMB 9529 / HD100) protein is UDP-N-acetylmuramoylalanine--D-glutamate ligase.